A 290-amino-acid chain; its full sequence is 4-hydroxybenzoate octaprenyltransferase (290 aa).

8 helical membrane passes run 21-41 (IGTL…VKGM), 44-64 (LSIL…GCVI), 84-104 (LATG…LVFC), 106-126 (FILV…AVFL), 142-162 (LFLG…SIEA), 212-232 (IISL…YLSQ), 235-255 (TSYF…CKLI), and 267-287 (FLNN…GIFF).

Belongs to the UbiA prenyltransferase family. Mg(2+) is required as a cofactor.

The protein resides in the cell inner membrane. The enzyme catalyses all-trans-octaprenyl diphosphate + 4-hydroxybenzoate = 4-hydroxy-3-(all-trans-octaprenyl)benzoate + diphosphate. It functions in the pathway cofactor biosynthesis; ubiquinone biosynthesis. Functionally, catalyzes the prenylation of para-hydroxybenzoate (PHB) with an all-trans polyprenyl group. Mediates the second step in the final reaction sequence of ubiquinone-8 (UQ-8) biosynthesis, which is the condensation of the polyisoprenoid side chain with PHB, generating the first membrane-bound Q intermediate 3-octaprenyl-4-hydroxybenzoate. This chain is 4-hydroxybenzoate octaprenyltransferase, found in Pasteurella multocida (strain Pm70).